The chain runs to 189 residues: Casparian strip membrane protein 1 (189 aa).

Residues 1–25 lie on the Cytoplasmic side of the membrane; the sequence is MMQAESGSAEAKGPLPPPVGRKRRG. Residues 26–46 form a helical membrane-spanning segment; that stretch reads LGILDFLLRLLAIGATLSAAI. The Extracellular segment spans residues 47–73; the sequence is TMGTTNETLQFFTQFFQFKARFYDLSA. Asparagine 52 carries N-linked (GlcNAc...) asparagine glycosylation. The helical transmembrane segment at 74–94 threads the bilayer; the sequence is FIYFVIANAIVGGYLLLSLPI. The Cytoplasmic portion of the chain corresponds to 95–108; that stretch reads SILNIVRPRAASSR. A helical transmembrane segment spans residues 109-129; that stretch reads VFLIFFDTVMVAVCTSGAAAA. The Extracellular portion of the chain corresponds to 130–158; it reads VAILYVARKGNSRTNWFAICQRFNSFCNQ. The helical transmembrane segment at 159 to 179 threads the bilayer; it reads AIGAVSASFAGVVFLILLVLL. Residues 180-189 lie on the Cytoplasmic side of the membrane; the sequence is SASTLYRRRP.

The protein belongs to the Casparian strip membrane proteins (CASP) family. Homodimer and heterodimers.

Its subcellular location is the cell membrane. In terms of biological role, regulates membrane-cell wall junctions and localized cell wall deposition. Required for establishment of the Casparian strip membrane domain (CSD) and the subsequent formation of Casparian strips, a cell wall modification of the root endodermis that determines an apoplastic barrier between the intraorganismal apoplasm and the extraorganismal apoplasm and prevents lateral diffusion. The protein is Casparian strip membrane protein 1 of Picea glauca (White spruce).